The primary structure comprises 251 residues: ATP synthase subunit a 2 (251 aa).

5 helical membrane-spanning segments follow: residues 35–55, 94–114, 133–153, 198–218, and 219–239; these read GQVF…SLLA, LPFI…GSLI, INTT…AGLS, LVVA…LMAL, and GLFT…AYIH.

Belongs to the ATPase A chain family. F-type ATPases have 2 components, CF(1) - the catalytic core - and CF(0) - the membrane proton channel. CF(1) has five subunits: alpha(3), beta(3), gamma(1), delta(1), epsilon(1). CF(0) has four main subunits: a, b, b' and c.

The protein resides in the cellular thylakoid membrane. Functionally, key component of the proton channel; it plays a direct role in the translocation of protons across the membrane. This Crocosphaera subtropica (strain ATCC 51142 / BH68) (Cyanothece sp. (strain ATCC 51142)) protein is ATP synthase subunit a 2.